The following is a 400-amino-acid chain: Phosphoglycerate kinase (400 aa).

Substrate contacts are provided by residues 19-21, Arg38, 61-64, Arg124, and Arg161; these read DLN and HLGR. ATP contacts are provided by residues Lys211, Gly299, Glu330, and 356-359; that span reads GGDS.

It belongs to the phosphoglycerate kinase family. Monomer.

It is found in the cytoplasm. It carries out the reaction (2R)-3-phosphoglycerate + ATP = (2R)-3-phospho-glyceroyl phosphate + ADP. Its pathway is carbohydrate degradation; glycolysis; pyruvate from D-glyceraldehyde 3-phosphate: step 2/5. The chain is Phosphoglycerate kinase from Parafrankia sp. (strain EAN1pec).